The chain runs to 425 residues: Raffinose permease (425 aa).

The Cytoplasmic segment spans residues 1 to 11; that stretch reads MNSASTHKNTD. The chain crosses the membrane as a helical span at residues 12-32; sequence FWIFGLFFFLYFFIMATCFPF. Residues 33–48 lie on the Periplasmic side of the membrane; sequence LPVWLSDVVGLSKTDT. The chain crosses the membrane as a helical span at residues 49–69; it reads GIVFSCLSLFAISFQPLLGVI. Topologically, residues 70–78 are cytoplasmic; the sequence is SDRLGLKKN. Residues 79 to 99 form a helical membrane-spanning segment; it reads LIWSISLLLVFFAPFFLYVFA. At 100–105 the chain is on the periplasmic side; it reads PLLHLN. Residues 106–126 traverse the membrane as a helical segment; sequence IWAGALTGGVFIGFVFSAGAG. Over 127–147 the chain is Cytoplasmic; sequence AIEAYIERVSRSSGFEYGKAR. The chain crosses the membrane as a helical span at residues 148–168; the sequence is MFGCLGWALCATMAGILFNVD. Pro-169 is a topological domain (periplasmic). Residues 170-190 form a helical membrane-spanning segment; the sequence is SLVFWMGSGGALLLLLLLYLA. The Cytoplasmic segment spans residues 191 to 229; it reads RPSTSQTAMVMNALGANSSLISTRMVFSLFRMRQMWMFV. Residues 230–250 form a helical membrane-spanning segment; it reads LYTIGVACVYDVFDQQFAIFF. Residues 251–265 lie on the Periplasmic side of the membrane; it reads RSFFDTPQAGIKAFG. Residues 266–286 traverse the membrane as a helical segment; it reads FATTAGEICNAIIMFCTPWII. At 287–294 the chain is on the cytoplasmic side; that stretch reads NRIGAKNT. Residues 295-315 form a helical membrane-spanning segment; sequence LLVAGGIMTIRITGSAFATTM. A topological domain (periplasmic) is located at residue Thr-316. Residues 317 to 337 traverse the membrane as a helical segment; the sequence is EVVILKMLHALEVPFLLVGAF. Over 338 to 351 the chain is Cytoplasmic; it reads KYITGVFDTRLSAT. Residues 352-372 form a helical membrane-spanning segment; that stretch reads VYLIGFQFSKQLAAILLSTFA. Over 373–383 the chain is Periplasmic; that stretch reads GHLYDRMGFQN. Residues 384–404 traverse the membrane as a helical segment; that stretch reads TYFVLGMIVLTVTVISAFTLS. At 405–425 the chain is on the cytoplasmic side; it reads SSPGIVHPSVEKAPVAHSEIN.

The protein belongs to the major facilitator superfamily. Oligosaccharide:H(+) symporter (OHS) (TC 2.A.1.5) family. In terms of assembly, monomer.

Its subcellular location is the cell inner membrane. Responsible for transport of raffinose into the cell. Can also transport lactose and melibiose. Has weak activity with maltose. This chain is Raffinose permease, found in Escherichia coli.